A 299-amino-acid polypeptide reads, in one-letter code: MANRGEPDPKKSTESICSLTKPQLYSLYDDDVVRSEDNEIYEELKRSVSIDSTKYSRDQTIDSTFYLAHKVGGSLPRNTVSSNNLERILSASSIHENFPSRTRQTRQNILHYLQAVLILSLSGFAYHELSRNLHDNHLLHPDFASRPLLLGVKLCNWLSNGVLPNWLGYGVEGLLFGSVVPILDNIFQTEVVKSSVHHDSLTSVIRSINAMLGVTFGIRKIQWNSSLQAAGAWGLLNIILWLFFDGSISMLMSCICIGVGCCISCYKDIIDGSQFLYFMDFYFLGSLMFGKLGRYLYSH.

Residues 1-108 (MANRGEPDPK…PSRTRQTRQN (108 aa)) lie on the Cytoplasmic side of the membrane. Serine 90 carries the post-translational modification Phosphoserine. The chain crosses the membrane as a helical span at residues 109 to 129 (ILHYLQAVLILSLSGFAYHEL). The Lumenal segment spans residues 130-161 (SRNLHDNHLLHPDFASRPLLLGVKLCNWLSNG). Residues 162–182 (VLPNWLGYGVEGLLFGSVVPI) traverse the membrane as a helical segment. Residues 183–237 (LDNIFQTEVVKSSVHHDSLTSVIRSINAMLGVTFGIRKIQWNSSLQAAGAWGLLN) lie on the Cytoplasmic side of the membrane. The chain crosses the membrane as a helical span at residues 238–258 (IILWLFFDGSISMLMSCICIG). Residues 259 to 268 (VGCCISCYKD) are Lumenal-facing. The chain crosses the membrane as a helical span at residues 269 to 289 (IIDGSQFLYFMDFYFLGSLMF). The Cytoplasmic portion of the chain corresponds to 290-299 (GKLGRYLYSH).

It belongs to the INSIG family.

Its subcellular location is the endoplasmic reticulum membrane. In terms of biological role, stabilizes the HMG-CoA reductase HMG2 by preventing its HRD1-dependent degradation. Binds directly to the sterol-sensing domain (SSD)-containing transmembrane region of HMG2, promoting its folding to protect it from degradation. In Saccharomyces cerevisiae (strain ATCC 204508 / S288c) (Baker's yeast), this protein is Protein NSG2 (NSG2).